Consider the following 442-residue polypeptide: NALCN channel auxiliary factor 2 (442 aa).

The chain crosses the membrane as a helical span at residues 42–62 (LASLLFFTVLLSNHLWLVSAG). Residues Asn-77, Asn-100, Asn-171, Asn-279, and Asn-354 are each glycosylated (N-linked (GlcNAc...) asparagine). The helical transmembrane segment at 406 to 426 (CVLVLMLLHTMASFSVVQNGV) threads the bilayer.

Belongs to the NALF family.

It is found in the membrane. Functionally, probable component of the NALCN channel complex, a channel that regulates the resting membrane potential and controls neuronal excitability. The sequence is that of NALCN channel auxiliary factor 2 (nalf2) from Xenopus tropicalis (Western clawed frog).